We begin with the raw amino-acid sequence, 243 residues long: Zinc import ATP-binding protein ZnuC (243 aa).

Residues 4–219 form the ABC transporter domain; it reads ITVENLSVRY…PEYRALFGTG (216 aa). 36-43 contributes to the ATP binding site; that stretch reads GPNGSGKT.

This sequence belongs to the ABC transporter superfamily. Zinc importer (TC 3.A.1.15.5) family. In terms of assembly, the complex is composed of two ATP-binding proteins (ZnuC), two transmembrane proteins (ZnuB) and a solute-binding protein (ZnuA).

Its subcellular location is the cell inner membrane. It catalyses the reaction Zn(2+)(out) + ATP(in) + H2O(in) = Zn(2+)(in) + ADP(in) + phosphate(in) + H(+)(in). Its function is as follows. Part of the ABC transporter complex ZnuABC involved in zinc import. Responsible for energy coupling to the transport system. This Jannaschia sp. (strain CCS1) protein is Zinc import ATP-binding protein ZnuC.